The chain runs to 259 residues: uncharacterized protein (259 aa).

This is an uncharacterized protein from Aquifex aeolicus (strain VF5).